The sequence spans 162 residues: Regulatory protein RecX (162 aa).

Belongs to the RecX family.

Its subcellular location is the cytoplasm. Its function is as follows. Modulates RecA activity. The protein is Regulatory protein RecX of Pectobacterium atrosepticum (strain SCRI 1043 / ATCC BAA-672) (Erwinia carotovora subsp. atroseptica).